The primary structure comprises 396 residues: MIEQSSLLNEVGAAITIKPNASRVLLSWDIVPEQSGMVALRKGSIIDGTNMQVLIPDYYKDSESKWGLPMYAVHRVDLHTQLRLLATQKEGPGQPCDVQVRSKVVSYDAEGAKVTTENGEVLRADLIIAADGVHSTAVKQVLGDEVVQAGDTGWACMRWLVPSDDFLSDPQTAHMIQDSTTRYFTAAGGAAALVWYPCRNNEVQNFLYLSREFDISHVGEDFRARVEPSVPLEYAKKHFATALQTVVKKANQVKFWKLVARGPIPKWHKDRLVLIGDAAHPMLTFQGQGGGQAIEDGAALGILLDNVHDRGEIEERLQLFEQIRRNRGSALQILSNTNPPVPQSVRDAAAEYLPGHRLSSTDDVNEYVFSFDVLAESKAALAILQSKERITKSGFL.

Position 3 (E3) interacts with FAD. Active-site residues include R158 and Y196. FAD contacts are provided by D277 and G290.

This sequence belongs to the paxM FAD-dependent monooxygenase family. In terms of assembly, monomer. The cofactor is FAD.

Functionally, FAD-dependent monooxygenase; part of the gene cluster that mediates the biosynthesis of the phomopsins, a group of hexapeptide mycotoxins which infects lupins and causes lupinosis disease in livestock. The role of phomE' within the phomopsins biosynthesis pathway has still to be determined. The pathway starts with the processing of the precursor phomA by several endopeptidases including kexin proteases as well as the cluster-specific S41 family peptidase phomP1 and the oligopeptidase phomG to produce 10 identical copies of the hexapeptide Tyr-Val-Ile-Pro-Ile-Asp. After being excised from the precursor peptide, the core peptides are cyclized and modified post-translationally by enzymes encoded within the gene cluster. The timing and order of proteolysis of the phomA precursor and PTMs are still unknown. Two tyrosinase-like enzymes, phomQ1 and phomQ2, catalyze the chlorination and hydroxylation of Tyr, respectively. PhomYb, is proposed to be involved in the construction of the macrocyclic structure. The other 4 ustYa family proteins may be involved in PTMs that generate the unique structure of phomopsin A. PhomYa is required for the hydroxylation of C-beta of Tyr. PhomYc, phomYd, and phomYe are responsible for the biosynthesis of 2,3-dehydroisoleucine (dIle), 2,3-dehydroaspartic acid (dAsp), and 3,4-dehydroproline (dPro), respectively. While dIle formation by phomYc is indispensable for the installation of dAsp by phomYd, the order of the other PTMs have not been elucidated yet. Most of the biosynthetic enzymes likely have broad substrate specificity, and thus, there might be a metabolic grid from a precursor to phomopsin A. The enzyme(s) responsible for the biosynthesis of 3,4-dehydrovaline (dVal) have also not been identified yet. Finally, phomM acts as an S-adenosylmethionine-dependent alpha-N-methyltransferase that catalyzes two successive N-methylation reactions, converting N-desmethyl-phomopsin A to phomopsin A and phomopsin A further to an N,N-dimethylated congener called phomopsin E. In Diaporthe leptostromiformis (Lupinosis disease fungus), this protein is FAD-dependent monooxygenase phomE'.